A 90-amino-acid polypeptide reads, in one-letter code: YcgL domain-containing protein YE2368 (90 aa).

A YcgL domain is found at 1–85 (MLCAIYRSPK…PPESLLKMHL (85 aa)).

This Yersinia enterocolitica serotype O:8 / biotype 1B (strain NCTC 13174 / 8081) protein is YcgL domain-containing protein YE2368.